Here is a 367-residue protein sequence, read N- to C-terminus: Heme A synthase (367 aa).

5 consecutive transmembrane segments (helical) span residues 12–32 (GAVR…VAVG), 99–119 (LLGR…WWQG), 127–147 (LGLL…WIMV), 163–183 (LALH…LAAG), and 198–218 (ATAL…GLVA). H264 provides a ligand contact to heme. 3 helical membrane-spanning segments follow: residues 266–286 (VTAY…RLTG), 296–316 (GVVI…LLAV), and 317–337 (PLWA…MATV). Residue H324 participates in heme binding.

It belongs to the COX15/CtaA family. Type 2 subfamily. As to quaternary structure, interacts with CtaB. Heme b serves as cofactor.

It is found in the cell membrane. The catalysed reaction is Fe(II)-heme o + 2 A + H2O = Fe(II)-heme a + 2 AH2. It functions in the pathway porphyrin-containing compound metabolism; heme A biosynthesis; heme A from heme O: step 1/1. Its function is as follows. Catalyzes the conversion of heme O to heme A by two successive hydroxylations of the methyl group at C8. The first hydroxylation forms heme I, the second hydroxylation results in an unstable dihydroxymethyl group, which spontaneously dehydrates, resulting in the formyl group of heme A. This is Heme A synthase from Methylobacterium radiotolerans (strain ATCC 27329 / DSM 1819 / JCM 2831 / NBRC 15690 / NCIMB 10815 / 0-1).